A 252-amino-acid chain; its full sequence is MAAACICQPNLLEINVSDGPLDMIRKKRKIQQPQLRPPLRENKCQPHFSVRKVNQSYIISLHKEITCQLIAEIVKQKLSRIWEKVYIPSYELISDKDGNQIYVEQSVDENRLTSEIMEKLDPNNIDIEAIEILFDDYHLELSRLTNGIIISSANDHFYREFSFNNIIDDNFKICGTSMSADSFDKIYGVMWIEVPFNGNGLQNDSAVNRVSTSHNQIEELNDIEQEIRAFNISRSNQESIIKKEVSRRLNGR.

It is found in the nucleus. Functionally, involved in the curing of prion [URE3]. Nuclear localization of this protein may suggest a role in transcription regulation, so it might exert an effect on [URE3] through known prion-curing chaperones or BTN2. In Saccharomyces cerevisiae (strain ATCC 204508 / S288c) (Baker's yeast), this protein is Curing of [URE3] protein 1 (CUR1).